The following is a 464-amino-acid chain: Glutamate--tRNA ligase (464 aa).

Residues 11-21 carry the 'HIGH' region motif; it reads PSPTGYLHIGG. The 'KMSKS' region signature appears at 253 to 257; sequence KLSKR. Lys256 contacts ATP.

Belongs to the class-I aminoacyl-tRNA synthetase family. Glutamate--tRNA ligase type 1 subfamily. As to quaternary structure, monomer.

It localises to the cytoplasm. It carries out the reaction tRNA(Glu) + L-glutamate + ATP = L-glutamyl-tRNA(Glu) + AMP + diphosphate. In terms of biological role, catalyzes the attachment of glutamate to tRNA(Glu) in a two-step reaction: glutamate is first activated by ATP to form Glu-AMP and then transferred to the acceptor end of tRNA(Glu). The sequence is that of Glutamate--tRNA ligase from Metamycoplasma arthritidis (strain 158L3-1) (Mycoplasma arthritidis).